Consider the following 85-residue polypeptide: MKAGIHPDYRKVVFHDTTVDHYFVVGSTLQTDRTIEWEGKTYPYITIEVSSESHPFYTGKQRVVQKEGRVANFTRRFGQFAKESK.

The protein belongs to the bacterial ribosomal protein bL31 family. Type B subfamily. In terms of assembly, part of the 50S ribosomal subunit.

The sequence is that of Large ribosomal subunit protein bL31B from Vibrio cholerae serotype O1 (strain ATCC 39541 / Classical Ogawa 395 / O395).